A 771-amino-acid polypeptide reads, in one-letter code: 5-methyltetrahydropteroyltriglutamate--homocysteine methyltransferase (771 aa).

5-methyltetrahydropteroyltri-L-glutamate is bound by residues 13–16 (RELK) and Lys128. Residues 451–453 (IGS) and Glu504 contribute to the L-homocysteine site. Residues 451 to 453 (IGS) and Glu504 each bind L-methionine. 5-methyltetrahydropteroyltri-L-glutamate contacts are provided by residues 535–536 (RC) and Trp581. L-homocysteine is bound at residue Asp619. L-methionine is bound at residue Asp619. A 5-methyltetrahydropteroyltri-L-glutamate-binding site is contributed by Glu625. Positions 661, 663, and 685 each coordinate Zn(2+). The active-site Proton donor is His714. Residue Cys746 coordinates Zn(2+).

Belongs to the vitamin-B12 independent methionine synthase family. It depends on Zn(2+) as a cofactor.

The enzyme catalyses 5-methyltetrahydropteroyltri-L-glutamate + L-homocysteine = tetrahydropteroyltri-L-glutamate + L-methionine. It functions in the pathway amino-acid biosynthesis; L-methionine biosynthesis via de novo pathway; L-methionine from L-homocysteine (MetE route): step 1/1. Functionally, catalyzes the transfer of a methyl group from 5-methyltetrahydrofolate to homocysteine resulting in methionine formation. This Nitrobacter winogradskyi (strain ATCC 25391 / DSM 10237 / CIP 104748 / NCIMB 11846 / Nb-255) protein is 5-methyltetrahydropteroyltriglutamate--homocysteine methyltransferase.